The primary structure comprises 212 residues: Probable nicotinate-nucleotide adenylyltransferase (212 aa).

The protein belongs to the NadD family.

The catalysed reaction is nicotinate beta-D-ribonucleotide + ATP + H(+) = deamido-NAD(+) + diphosphate. It functions in the pathway cofactor biosynthesis; NAD(+) biosynthesis; deamido-NAD(+) from nicotinate D-ribonucleotide: step 1/1. Catalyzes the reversible adenylation of nicotinate mononucleotide (NaMN) to nicotinic acid adenine dinucleotide (NaAD). This chain is Probable nicotinate-nucleotide adenylyltransferase, found in Shewanella sp. (strain MR-7).